We begin with the raw amino-acid sequence, 171 residues long: Probable chemoreceptor glutamine deamidase CheD 1 (171 aa).

The segment covering 1–18 (MTRTTGAAPDRAAPAAGE) has biased composition (low complexity). Positions 1-23 (MTRTTGAAPDRAAPAAGETPGGG) are disordered.

It belongs to the CheD family.

The catalysed reaction is L-glutaminyl-[protein] + H2O = L-glutamyl-[protein] + NH4(+). Its function is as follows. Probably deamidates glutamine residues to glutamate on methyl-accepting chemotaxis receptors (MCPs), playing an important role in chemotaxis. The chain is Probable chemoreceptor glutamine deamidase CheD 1 from Anaeromyxobacter dehalogenans (strain 2CP-C).